A 138-amino-acid polypeptide reads, in one-letter code: Prefoldin subunit alpha (138 aa).

It belongs to the prefoldin subunit alpha family. As to quaternary structure, heterohexamer of two alpha and four beta subunits.

It localises to the cytoplasm. Its function is as follows. Molecular chaperone capable of stabilizing a range of proteins. Seems to fulfill an ATP-independent, HSP70-like function in archaeal de novo protein folding. The protein is Prefoldin subunit alpha of Methanosphaera stadtmanae (strain ATCC 43021 / DSM 3091 / JCM 11832 / MCB-3).